An 89-amino-acid chain; its full sequence is uncharacterized protein (89 aa).

The next 3 membrane-spanning stretches (helical) occupy residues 9-29 (ICNFLFQFSLEFFSISSLHSI), 35-55 (ISLSLSLFFLVAILYNIYIYL), and 65-85 (ILFAIPPLCPLCSPCFFFGTS).

It localises to the membrane. This is an uncharacterized protein from Schizosaccharomyces pombe (strain 972 / ATCC 24843) (Fission yeast).